Here is a 343-residue protein sequence, read N- to C-terminus: Leucine-rich repeat-containing protein 39 (343 aa).

LRR repeat units follow at residues Glu64–Leu87, Ser88–Phe110, Gln111–Leu133, Thr134–Cys156, Asn158–Leu180, Lys181–Leu203, Pro204–Met226, Lys228–Met249, Lys250–Asn274, and Leu275–Asn295.

Its subcellular location is the cytoplasm. It is found in the myofibril. The protein localises to the sarcomere. It localises to the m line. Its function is as follows. Component of the sarcomeric M-band which plays a role in myocyte response to biomechanical stress. May regulate expression of other M-band proteins via an SRF-dependent pathway. Important for normal contractile function in heart. This Danio rerio (Zebrafish) protein is Leucine-rich repeat-containing protein 39.